An 814-amino-acid chain; its full sequence is Telomere repeats-binding bouquet formation protein 1 (814 aa).

ARM repeat units lie at residues 93-136 (EMFR…KTSR) and 327-368 (GGLP…GMST). 3 disordered regions span residues 461 to 521 (DQDS…ELKR), 551 to 584 (STPTEGNRDTQGPDIFRHPDPVKRNQREPSLSDD), and 653 to 753 (FRRS…KRQN). Residues 488–512 (EKSKKRKHKQKRENERSDNQETRRE) adopt a coiled-coil conformation. Basic and acidic residues-rich tracts occupy residues 499–521 (RENERSDNQETRREGVNKRELKR), 565–577 (IFRHPDPVKRNQR), and 679–688 (EHSTSAQEHK). The segment covering 689–699 (QKSKREKHKLS) has biased composition (basic residues). Positions 714–741 (RPRETYSPDVKQWTDHRHLKKSSEDARS) are enriched in basic and acidic residues. Residues 746–799 (GRHRKRQNWSDKELCYLTKGVKRFGHSWNTILWKYPFHPGRTNVDLAKKFYHMQ) form the Myb-like domain.

It belongs to the TERB1 family. As to quaternary structure, component of the MAJIN-TERB1-TERB2 complex.

Its subcellular location is the chromosome. It is found in the telomere. The protein resides in the nucleus inner membrane. Meiosis-specific telomere-associated protein involved in meiotic telomere attachment to the nucleus inner membrane, a crucial step for homologous pairing and synapsis. Component of the MAJIN-TERB1-TERB2 complex, which promotes telomere cap exchange by mediating attachment of telomeric DNA to the inner nuclear membrane and replacement of the protective cap of telomeric chromosomes: in early meiosis, the MAJIN-TERB1-TERB2 complex associates with telomeric DNA and the shelterin/telosome complex. During prophase, the complex matures and promotes release of the shelterin/telosome complex from telomeric DNA. In the MAJIN-TERB1-TERB2 complex, TERB1 probably mediates association with the shelterin/telosome complex. This is Telomere repeats-binding bouquet formation protein 1 (ccdc79) from Danio rerio (Zebrafish).